The following is a 660-amino-acid chain: Methionine--tRNA ligase (660 aa).

Residues 15-25 (YYPSDKLHIGH) carry the 'HIGH' region motif. The short motif at 311-315 (KMSKS) is the 'KMSKS' region element. Lys-314 is a binding site for ATP. A disordered region spans residues 535–554 (LMGGSKKPEEAPKDEKEESD). Over residues 540-550 (KKPEEAPKDEK) the composition is skewed to basic and acidic residues. Residues 560–660 (DFSKVELRIA…GALPNGSLVK (101 aa)) enclose the tRNA-binding domain.

The protein belongs to the class-I aminoacyl-tRNA synthetase family. MetG type 2B subfamily. In terms of assembly, homodimer.

It localises to the cytoplasm. The catalysed reaction is tRNA(Met) + L-methionine + ATP = L-methionyl-tRNA(Met) + AMP + diphosphate. Functionally, is required not only for elongation of protein synthesis but also for the initiation of all mRNA translation through initiator tRNA(fMet) aminoacylation. This Halalkalibacterium halodurans (strain ATCC BAA-125 / DSM 18197 / FERM 7344 / JCM 9153 / C-125) (Bacillus halodurans) protein is Methionine--tRNA ligase (metG).